Here is a 569-residue protein sequence, read N- to C-terminus: Acyl-CoA-binding domain-containing protein 5 (569 aa).

The signal sequence occupies residues 1 to 31 (MELFYELLLTAAASLLVAFLLARLLASAATA). One can recognise an ACB domain in the interval 415-506 (IEKRFGVAAA…LSEAIPGWMG (92 aa)). An acyl-CoA-binding residues include Lys-474 and Tyr-493. N-linked (GlcNAc...) asparagine glycosylation occurs at Asn-508. Composition is skewed to polar residues over residues 533 to 544 (INQHDSQGNEDN) and 552 to 569 (LTSS…IPAE). Residues 533–569 (INQHDSQGNEDNTGMYEGHLTSSPNPEKGQSSDIPAE) are disordered.

This sequence belongs to the ACBP family. As to expression, highly expressed in seeds and leaves. Expressed at low levels in roots.

It localises to the endoplasmic reticulum. Functionally, binds medium- and long-chain acyl-CoA esters with high affinity. Can interact in vitro with palmitoyl-CoA and linolenoyl-CoA. Binds phosphatidic acid (PA) and phosphatidylcholine (PC) in vitro. May play a role in the biosynthesis of phospholipids. The protein is Acyl-CoA-binding domain-containing protein 5 of Oryza sativa subsp. japonica (Rice).